The primary structure comprises 274 residues: ATP synthase subunit a (274 aa).

The next 5 membrane-spanning stretches (helical) occupy residues 40–60 (FWVC…VILI), 110–130 (IFVW…LVPF), 149–169 (DVNI…FYSI), 224–244 (IFIL…SVPW), and 245–265 (AIFH…LTIV).

It belongs to the ATPase A chain family. In terms of assembly, F-type ATPases have 2 components, CF(1) - the catalytic core - and CF(0) - the membrane proton channel. CF(1) has five subunits: alpha(3), beta(3), gamma(1), delta(1), epsilon(1). CF(0) has three main subunits: a(1), b(2) and c(9-12). The alpha and beta chains form an alternating ring which encloses part of the gamma chain. CF(1) is attached to CF(0) by a central stalk formed by the gamma and epsilon chains, while a peripheral stalk is formed by the delta and b chains.

The protein localises to the cell membrane. In terms of biological role, key component of the proton channel; it plays a direct role in the translocation of protons across the membrane. This Buchnera aphidicola subsp. Baizongia pistaciae (strain Bp) protein is ATP synthase subunit a.